The following is a 519-amino-acid chain: Apolipoprotein N-acyltransferase (519 aa).

A run of 6 helical transmembrane segments spans residues 6-26 (APLG…IWIF), 47-67 (LTAI…ITGV), 83-103 (IAAF…FVWL), 126-146 (LFIL…SHSI), 174-194 (LLSA…IDFL), and 206-226 (WHYF…GWLL). Residues 244–482 (IQGNIPNQIK…YEIHAAPIYR (239 aa)) form the CN hydrolase domain. Glutamate 285 (proton acceptor) is an active-site residue. Residue lysine 343 is part of the active site. Catalysis depends on cysteine 394, which acts as the Nucleophile. Residues 496 to 516 (VVFLLLVVSAIAWLYQIVFPL) traverse the membrane as a helical segment.

Belongs to the CN hydrolase family. Apolipoprotein N-acyltransferase subfamily.

It is found in the cell inner membrane. The enzyme catalyses N-terminal S-1,2-diacyl-sn-glyceryl-L-cysteinyl-[lipoprotein] + a glycerophospholipid = N-acyl-S-1,2-diacyl-sn-glyceryl-L-cysteinyl-[lipoprotein] + a 2-acyl-sn-glycero-3-phospholipid + H(+). It participates in protein modification; lipoprotein biosynthesis (N-acyl transfer). Catalyzes the phospholipid dependent N-acylation of the N-terminal cysteine of apolipoprotein, the last step in lipoprotein maturation. This Synechocystis sp. (strain ATCC 27184 / PCC 6803 / Kazusa) protein is Apolipoprotein N-acyltransferase.